Consider the following 92-residue polypeptide: Large ribosomal subunit protein eL31 (92 aa).

The protein belongs to the eukaryotic ribosomal protein eL31 family.

The sequence is that of Large ribosomal subunit protein eL31 from Halobacterium salinarum (strain ATCC 29341 / DSM 671 / R1).